A 246-amino-acid chain; its full sequence is tRNA (guanine-N(1)-)-methyltransferase (246 aa).

S-adenosyl-L-methionine is bound by residues G114 and 134-139 (IGDYIL).

This sequence belongs to the RNA methyltransferase TrmD family. Homodimer.

It is found in the cytoplasm. It catalyses the reaction guanosine(37) in tRNA + S-adenosyl-L-methionine = N(1)-methylguanosine(37) in tRNA + S-adenosyl-L-homocysteine + H(+). Its function is as follows. Specifically methylates guanosine-37 in various tRNAs. In Coxiella burnetii (strain RSA 331 / Henzerling II), this protein is tRNA (guanine-N(1)-)-methyltransferase.